The sequence spans 335 residues: Erlin-2-A (335 aa).

The Cytoplasmic portion of the chain corresponds to 1–2 (MS). The chain crosses the membrane as a helical span at residues 3 to 23 (HAGAIVGLGVALIAAALFSAI). Residues 24–335 (HKIEEGHVGV…GLDEAASAEE (312 aa)) lie on the Lumenal side of the membrane. N-linked (GlcNAc...) asparagine glycosylation occurs at Asn-106.

It belongs to the band 7/mec-2 family.

The protein resides in the endoplasmic reticulum membrane. Mediates the endoplasmic reticulum-associated degradation (ERAD) of inositol 1,4,5-trisphosphate receptors (IP3Rs). Promotes sterol-accelerated ERAD of HMGCR. Involved in regulation of cellular cholesterol homeostasis by regulation the SREBP signaling pathway. The sequence is that of Erlin-2-A (erlin2-a) from Xenopus laevis (African clawed frog).